The following is a 409-amino-acid chain: Tyrosine--tRNA ligase (409 aa).

Residue Tyr39 coordinates L-tyrosine. A 'HIGH' region motif is present at residues 44-53 (PTAPSLHVGS). Residues Tyr176 and Gln180 each contribute to the L-tyrosine site. A 'KMSKS' region motif is present at residues 236–240 (KMGKT). An ATP-binding site is contributed by Lys239. The 64-residue stretch at 346–409 (IGIVDALVGL…KKKHGILRKA (64 aa)) folds into the S4 RNA-binding domain.

The protein belongs to the class-I aminoacyl-tRNA synthetase family. TyrS type 1 subfamily. As to quaternary structure, homodimer.

The protein resides in the cytoplasm. It catalyses the reaction tRNA(Tyr) + L-tyrosine + ATP = L-tyrosyl-tRNA(Tyr) + AMP + diphosphate + H(+). Its function is as follows. Catalyzes the attachment of tyrosine to tRNA(Tyr) in a two-step reaction: tyrosine is first activated by ATP to form Tyr-AMP and then transferred to the acceptor end of tRNA(Tyr). This Novosphingobium aromaticivorans (strain ATCC 700278 / DSM 12444 / CCUG 56034 / CIP 105152 / NBRC 16084 / F199) protein is Tyrosine--tRNA ligase.